A 128-amino-acid chain; its full sequence is Small ribosomal subunit protein uS9c (128 aa).

Residues 106–128 (SRIKERKKYGLKKARKAPQFSKR) form a disordered region. A compositionally biased stretch (basic residues) spans 109-128 (KERKKYGLKKARKAPQFSKR).

Belongs to the universal ribosomal protein uS9 family.

The protein resides in the plastid. The protein localises to the chloroplast. This Cyanidium caldarium (Red alga) protein is Small ribosomal subunit protein uS9c (rps9).